We begin with the raw amino-acid sequence, 207 residues long: Small ribosomal subunit protein uS4c (207 aa).

An S4 RNA-binding domain is found at 92-153; sequence MRLDNILFRL…PKTYQSILSK (62 aa).

Belongs to the universal ribosomal protein uS4 family. As to quaternary structure, part of the 30S ribosomal subunit. Contacts protein S5. The interaction surface between S4 and S5 is involved in control of translational fidelity.

It localises to the plastid. The protein resides in the chloroplast. Functionally, one of the primary rRNA binding proteins, it binds directly to 16S rRNA where it nucleates assembly of the body of the 30S subunit. With S5 and S12 plays an important role in translational accuracy. This Equisetum laevigatum (Smooth horsetail) protein is Small ribosomal subunit protein uS4c (rps4).